A 255-amino-acid chain; its full sequence is Indole-3-glycerol phosphate synthase (255 aa).

The protein belongs to the TrpC family.

The catalysed reaction is 1-(2-carboxyphenylamino)-1-deoxy-D-ribulose 5-phosphate + H(+) = (1S,2R)-1-C-(indol-3-yl)glycerol 3-phosphate + CO2 + H2O. It participates in amino-acid biosynthesis; L-tryptophan biosynthesis; L-tryptophan from chorismate: step 4/5. This is Indole-3-glycerol phosphate synthase from Streptococcus thermophilus (strain ATCC BAA-491 / LMD-9).